We begin with the raw amino-acid sequence, 183 residues long: Threonylcarbamoyl-AMP synthase (183 aa).

One can recognise a YrdC-like domain in the interval 1-183; that stretch reads MNFTEIAEKL…LLTDQLIREG (183 aa).

Belongs to the SUA5 family. TsaC subfamily.

The protein localises to the cytoplasm. It catalyses the reaction L-threonine + hydrogencarbonate + ATP = L-threonylcarbamoyladenylate + diphosphate + H2O. Required for the formation of a threonylcarbamoyl group on adenosine at position 37 (t(6)A37) in tRNAs that read codons beginning with adenine. Catalyzes the conversion of L-threonine, HCO(3)(-)/CO(2) and ATP to give threonylcarbamoyl-AMP (TC-AMP) as the acyladenylate intermediate, with the release of diphosphate. This is Threonylcarbamoyl-AMP synthase from Actinobacillus succinogenes (strain ATCC 55618 / DSM 22257 / CCUG 43843 / 130Z).